The following is a 554-amino-acid chain: DDB1- and CUL4-associated factor 11 homolog (554 aa).

The disordered stretch occupies residues glutamine 24–proline 52. The span at aspartate 33–threonine 43 shows a compositional bias: acidic residues. WD repeat units lie at residues glutamine 245–threonine 284, alanine 288–valine 328, glycine 336–glycine 375, glycine 414–arginine 458, and glycine 461–isoleucine 500. The interval proline 527–isoleucine 554 is disordered.

It belongs to the WD repeat LEC14B family.

Involved in regulation of lifespan. Required for dopaminergic CEP neuron degeneration in response to Mn(2+). The sequence is that of DDB1- and CUL4-associated factor 11 homolog (wdr-23) from Caenorhabditis briggsae.